The following is a 481-amino-acid chain: Proline--tRNA ligase 2 (481 aa).

It belongs to the class-II aminoacyl-tRNA synthetase family. ProS type 3 subfamily. As to quaternary structure, homodimer.

The protein localises to the cytoplasm. It catalyses the reaction tRNA(Pro) + L-proline + ATP = L-prolyl-tRNA(Pro) + AMP + diphosphate. In terms of biological role, catalyzes the attachment of proline to tRNA(Pro) in a two-step reaction: proline is first activated by ATP to form Pro-AMP and then transferred to the acceptor end of tRNA(Pro). In Clostridioides difficile (strain 630) (Peptoclostridium difficile), this protein is Proline--tRNA ligase 2.